Reading from the N-terminus, the 261-residue chain is Adenosylcobinamide-GDP ribazoletransferase (261 aa).

Transmembrane regions (helical) follow at residues 12–32, 46–66, 67–87, 120–140, and 199–219; these read NLFFVAMSFFTRIPVPSWVVI, LVGLLIGLICALVFWLAQLIL, PASIAILLAMVAGVLVTGAFH, GALSLGLVLLLKWQLLVELAL, and IFVLLWLNGVAAFVLFITLWL.

The protein belongs to the CobS family. Requires Mg(2+) as cofactor.

The protein resides in the cell inner membrane. The catalysed reaction is alpha-ribazole + adenosylcob(III)inamide-GDP = adenosylcob(III)alamin + GMP + H(+). The enzyme catalyses alpha-ribazole 5'-phosphate + adenosylcob(III)inamide-GDP = adenosylcob(III)alamin 5'-phosphate + GMP + H(+). It participates in cofactor biosynthesis; adenosylcobalamin biosynthesis; adenosylcobalamin from cob(II)yrinate a,c-diamide: step 7/7. Its function is as follows. Joins adenosylcobinamide-GDP and alpha-ribazole to generate adenosylcobalamin (Ado-cobalamin). Also synthesizes adenosylcobalamin 5'-phosphate from adenosylcobinamide-GDP and alpha-ribazole 5'-phosphate. In Shewanella frigidimarina (strain NCIMB 400), this protein is Adenosylcobinamide-GDP ribazoletransferase.